The chain runs to 391 residues: MSKSFAEELEMLKAQGLHRRMRRIAGSQGSRAVVDGKEALLLCSNNYLGLADHPRLAEAAIRAVERYGTSSGASRLVSGTMELHALLEERIARFKGTGAALVFNSGYAANSGIIPALVGKGDVVFSDRLNHASIVDGCLLSRATMVRYPHNDTAALRRLMERHETAGRRLLVTDGVFSMDGDMAPLRELAALKREFGALLMVDDAHGTGVLGATGRGSAELQGVMAEIDIHMGTLGKALGSFGAYAAASEDVIDYLANKARSFIFSTSLPPAVLAASLAAVDLVDSPDGAALRERLARNTAFFREGLCAAGFDTMGSETQIVPLFVGGAEETMAFTARLLEAGVFAQGIRPPTVPAGTCRLRCTLMATHAEEDLARAVALMAAIGKGMGVI.

Arg19 contributes to the substrate binding site. 106–107 (GY) is a pyridoxal 5'-phosphate binding site. His131 is a binding site for substrate. 3 residues coordinate pyridoxal 5'-phosphate: Ser178, His206, and Thr234. An N6-(pyridoxal phosphate)lysine modification is found at Lys237. Residue Thr353 participates in substrate binding.

The protein belongs to the class-II pyridoxal-phosphate-dependent aminotransferase family. BioF subfamily. In terms of assembly, homodimer. It depends on pyridoxal 5'-phosphate as a cofactor.

The catalysed reaction is 6-carboxyhexanoyl-[ACP] + L-alanine + H(+) = (8S)-8-amino-7-oxononanoate + holo-[ACP] + CO2. It functions in the pathway cofactor biosynthesis; biotin biosynthesis. In terms of biological role, catalyzes the decarboxylative condensation of pimeloyl-[acyl-carrier protein] and L-alanine to produce 8-amino-7-oxononanoate (AON), [acyl-carrier protein], and carbon dioxide. This chain is 8-amino-7-oxononanoate synthase, found in Geobacter metallireducens (strain ATCC 53774 / DSM 7210 / GS-15).